Consider the following 1016-residue polypeptide: Poly [ADP-ribose] polymerase 1 (1016 aa).

N-acetylalanine is present on alanine 2. The segment at 9–93 adopts a PARP-type 1 zinc-finger fold; the sequence is YRVEYAKSGR…TIKKMAETGG (85 aa). Zn(2+) is bound by residues cysteine 21 and cysteine 24. Serine 41 bears the Phosphoserine mark. Residues histidine 53 and cysteine 56 each coordinate Zn(2+). An N6-acetyllysine mark is found at lysine 100 and lysine 108. A PARP-type 2 zinc finger spans residues 116 to 206; sequence FGAGYAKSNR…TLKKQLPAIK (91 aa). Zn(2+) is bound by residues cysteine 128 and cysteine 131. Lysine 134 carries the post-translational modification N6-acetyllysine. Zn(2+) is bound by residues histidine 162 and cysteine 165. A phosphoserine mark is found at serine 180 and serine 188. A Glycyl lysine isopeptide (Lys-Gly) (interchain with G-Cter in SUMO1); alternate cross-link involves residue lysine 206. Lysine 206 participates in a covalent cross-link: Glycyl lysine isopeptide (Lys-Gly) (interchain with G-Cter in SUMO2); alternate. Short sequence motifs (nuclear localization signal) lie at residues 210 to 212 and 224 to 229; these read KRK and KKKSKK. Positions 228–362 constitute a PADR1 zinc-binding domain; the sequence is KKEKDKEIKL…IKKQDRIFPP (135 aa). Lysine 252 participates in a covalent cross-link: Glycyl lysine isopeptide (Lys-Gly) (interchain with G-Cter in SUMO2). A phosphoserine mark is found at serine 277 and serine 280. The interval 293-335 is zinc ribbon; sequence GALLPCEECSGQLVFKGDAYYCTGDVTAWTKCMVKTQTPNRKE. Zn(2+) contacts are provided by cysteine 298, cysteine 301, cysteine 314, and cysteine 324. A disordered region spans residues 360–390; that stretch reads FPPESSTPVGAAAPPSAASAPAAVHSGPPDK. The span at 365-386 shows a compositional bias: low complexity; that stretch reads STPVGAAAPPSAASAPAAVHSG. The tract at residues 376 to 526 is automodification domain; it reads AASAPAAVHS…GTNKSEKRMK (151 aa). A BRCT domain is found at 387 to 478; sequence PPDKPLSNMK…KSLQELLSTH (92 aa). Residue aspartate 389 is modified to PolyADP-ribosyl aspartic acid. PolyADP-ribosyl glutamic acid is present on residues glutamate 409, glutamate 415, glutamate 437, glutamate 446, glutamate 447, glutamate 450, and glutamate 458. A Glycyl lysine isopeptide (Lys-Gly) (interchain with G-Cter in SUMO2) cross-link involves residue lysine 469. A polyADP-ribosyl glutamic acid mark is found at glutamate 473 and glutamate 486. A Glycyl lysine isopeptide (Lys-Gly) (interchain with G-Cter in SUMO1); alternate cross-link involves residue lysine 488. Residue lysine 488 forms a Glycyl lysine isopeptide (Lys-Gly) (interchain with G-Cter in SUMO2); alternate linkage. Residues glutamate 490 and glutamate 493 each carry the polyADP-ribosyl glutamic acid modification. The disordered stretch occupies residues 494–523; sequence AVGPKGKSGAAPSKKSKGPVKEEGTNKSEK. Positions 496 to 506 are enriched in low complexity; that stretch reads GPKGKSGAAPS. Residues serine 501, serine 506, and serine 509 each carry the ADP-ribosylserine modification. The segment covering 512–523 has biased composition (basic and acidic residues); the sequence is PVKEEGTNKSEK. A Glycyl lysine isopeptide (Lys-Gly) (interchain with G-Cter in SUMO2) cross-link involves residue lysine 514. Glutamate 515 and glutamate 516 each carry polyADP-ribosyl glutamic acid. At serine 521 the chain carries ADP-ribosylserine. A PolyADP-ribosyl glutamic acid modification is found at glutamate 522. Position 523 is an N6-(ADP-ribosyl)lysine (lysine 523). Lysine 530 is covalently cross-linked (Glycyl lysine isopeptide (Lys-Gly) (interchain with G-Cter in SUMO2)). The 97-residue stretch at 544 to 640 folds into the WGR domain; that stretch reads NAHVLEKGGK…KNFTKHPKKF (97 aa). Threonine 596 carries the phosphothreonine modification. N6-acetyllysine occurs at positions 602 and 623. The PARP alpha-helical domain occupies 664 to 781; it reads KSKLPKPVQN…DIEVAYSLLR (118 aa). Lysine 750 participates in a covalent cross-link: Glycyl lysine isopeptide (Lys-Gly) (interchain with G-Cter in SUMO1); alternate. Lysine 750 participates in a covalent cross-link: Glycyl lysine isopeptide (Lys-Gly) (interchain with G-Cter in SUMO2); alternate. Serine 784 and serine 788 each carry phosphoserine. The PARP catalytic domain maps to 790 to 1016; the sequence is DPIDVNYEKL…LKFNFKTSLW (227 aa). NAD(+)-binding positions include 864 to 866, glycine 873, arginine 880, and serine 906; that span reads HGS. Glutamate 990 (for poly [ADP-ribose] polymerase activity) is an active-site residue.

It belongs to the ARTD/PARP family. As to quaternary structure, homodimer; PARP-type zinc-fingers from separate PARP1 molecules form a dimer module that specifically recognizes DNA strand breaks. Heterodimer; heterodimerizes with PARP2. Interacts (via the PARP catalytic domain) with HPF1. Interacts with NMNAT1. Interacts with nucleosomes; with a preference for nucleosomes containing H2A.X. Interacts with APTX. Component of a base excision repair (BER) complex, containing at least XRCC1, PARP1, PARP2, POLB and LRIG3. Interacts with SRY. The SWAP complex consists of NPM1, NCL, PARP1 and SWAP70. Interacts with TIAM2. Interacts with PARP3; leading to activate PARP1 in absence of DNA. Interacts (when poly-ADP-ribosylated) with CHD1L (via macro domain). Interacts with the DNA polymerase alpha catalytic subunit POLA1; this interaction functions as part of the control of replication fork progression. Interacts with EEF1A1 and TXK. Interacts with RNF4. Interacts with RNF146. Interacts with ZNF423. Interacts with APLF. Interacts with SNAI1 (via zinc fingers); the interaction requires SNAI1 to be poly-ADP-ribosylated and non-phosphorylated (active) by GSK3B. Interacts (when poly-ADP-ribosylated) with PARP9. Interacts with NR4A3; activates PARP1 by improving acetylation of PARP1 and suppressing the interaction between PARP1 and SIRT1. Interacts (via catalytic domain) with PUM3; the interaction inhibits the poly-ADP-ribosylation activity of PARP1 and the degradation of PARP1 by CASP3 following genotoxic stress. Interacts with ZNF365. Interacts with RRP1B. Interacts with TIMELESS; the interaction is direct. Interacts with CGAS; leading to impede the formation of the PARP1-TIMELESS complex. Interacts with KHDC3L, the interaction is increased following the formation of DNA double-strand breaks. Interacts (when auto-poly-ADP-ribosylated) with XRCC1; leading to inhibit PARP1 ADP-ribosyltransferase activity. Interacts with SPINDOC; promoting PARP1 ADP-ribosyltransferase activity. Interacts with BANF1; leading to inhibit PARP1 ADP-ribosyltransferase activity in response to oxidative DNA damage. Interacts (when sumoylated and ubiquitinated) with VCP/p97; leading to its extraction from chromatin. Interacts with YARS1; promoting PARP1 ADP-ribosyltransferase activity. Interacts with PACMP micropeptide; Interacts with PACMP micropeptide; interaction. Interacts (when poly-ADP-ribosylated) with isoform 1 of MACROH2A1; MACROH2A1 specifically binds to poly-ADP-ribose chains and inhibits PARP1 activity, limiting the consumption of nuclear NAD(+). Interacts with CARM1; promoting recruitment to replication forks. Interacts with RECQL. Interacts with ZNF32; the interaction reshapes ZNF432 interacting proteins. Interacts with TPRN; TPRN interacts with a number of DNA damage response proteins, is recruited to sites of DNA damage and may play a role in DNA damage repair. In terms of assembly, interacts (when auto-poly-ADP-ribosylated) with AIFM1. Post-translationally, poly-ADP-ribosylated on serine, glutamate and aspartate residues by autocatalysis. Auto-ADP-ribosylation on serine takes place following interaction with HPF1. Auto poly-ADP-ribosylation on serine residues promotes its dissociation from chromatin. Poly-ADP-ribosylated by PARP2; poly-ADP-ribosylation mediates the recruitment of CHD1L to DNA damage sites. Mono-ADP-ribosylated at Lys-523 by SIRT6 in response to oxidative stress, promoting recruitment to double-strand breaks (DSBs) sites. S-nitrosylated, leading to inhibit transcription regulation activity. In terms of processing, phosphorylated at Thr-596 by PRKDC in response to DNA damage following virus infection, promoting its translocation to the cytosol. Phosphorylated by TXK. Post-translationally, proteolytically cleaved by caspase-3 (CASP3) and caspase-7 (CASP7) in response to apoptosis to generate the Poly [ADP-ribose] polymerase 1, processed N-terminus and Poly [ADP-ribose] polymerase 1, processed C-terminus forms. Sumoylated with SUMO1 or SUMO2 by PIAS4 following prolonged residence (trapping) to chromatin. Sumoylation promotes ubiquitination by RNF4 and removal from chromatin by VCP/p97. In terms of processing, ubiquitinated by RNF4 following sumoylation by PIAS4 in response to prolonged residence (trapping) to chromatin. Ubiquitination promotes removal from chromatin by VCP/p97.

Its subcellular location is the chromosome. The protein resides in the nucleus. The protein localises to the nucleolus. It localises to the cytoplasm. It is found in the cytosol. The catalysed reaction is NAD(+) + (ADP-D-ribosyl)n-acceptor = nicotinamide + (ADP-D-ribosyl)n+1-acceptor + H(+).. It catalyses the reaction L-seryl-[protein] + NAD(+) = O-(ADP-D-ribosyl)-L-seryl-[protein] + nicotinamide + H(+). It carries out the reaction L-aspartyl-[protein] + NAD(+) = 4-O-(ADP-D-ribosyl)-L-aspartyl-[protein] + nicotinamide. The enzyme catalyses L-glutamyl-[protein] + NAD(+) = 5-O-(ADP-D-ribosyl)-L-glutamyl-[protein] + nicotinamide. The catalysed reaction is L-tyrosyl-[protein] + NAD(+) = O-(ADP-D-ribosyl)-L-tyrosyl-[protein] + nicotinamide + H(+). It catalyses the reaction L-histidyl-[protein] + NAD(+) = N(tele)-(ADP-D-ribosyl)-L-histidyl-[protein] + nicotinamide + H(+). With respect to regulation, ADP-ribosyltransferase activity is regulated via an allosteric activation mechanism. In absence of activation signal, PARP1 is autoinhibited by the PARP alpha-helical domain (also named HD region), which prevents effective NAD(+)-binding. Activity is highly stimulated by signals, such as DNA strand breaks. Binding to damaged DNA unfolds the PARP alpha-helical domain, relieving autoinhibition. Poly-ADP-ribosyltransferase activity is tightly regulated and PARP1 is removed from damaged chromatin following initial poly-ADP-ribosylation of chromatin to avoid prolonged residence (trapping) that has cytotoxic consequences. A number of factors (VCP/p97) or post-translational modifications (auto-poly-ADP-ribosylation or ubiquitination) promote PARP1 removal from chromatin. Functionally, poly-ADP-ribosyltransferase that mediates poly-ADP-ribosylation of proteins and plays a key role in DNA repair. Mediates glutamate, aspartate, serine, histidine or tyrosine ADP-ribosylation of proteins: the ADP-D-ribosyl group of NAD(+) is transferred to the acceptor carboxyl group of target residues and further ADP-ribosyl groups are transferred to the 2'-position of the terminal adenosine moiety, building up a polymer with an average chain length of 20-30 units. Serine ADP-ribosylation of proteins constitutes the primary form of ADP-ribosylation of proteins in response to DNA damage. Specificity for the different amino acids is conferred by interacting factors, such as HPF1 and NMNAT1. Following interaction with HPF1, catalyzes serine ADP-ribosylation of target proteins; HPF1 confers serine specificity by completing the PARP1 active site. Also catalyzes tyrosine ADP-ribosylation of target proteins following interaction with HPF1. Following interaction with NMNAT1, catalyzes glutamate and aspartate ADP-ribosylation of target proteins; NMNAT1 confers glutamate and aspartate specificity. PARP1 initiates the repair of DNA breaks: recognizes and binds DNA breaks within chromatin and recruits HPF1, licensing serine ADP-ribosylation of target proteins, such as histones (H2BS6ADPr and H3S10ADPr), thereby promoting decompaction of chromatin and the recruitment of repair factors leading to the reparation of DNA strand breaks. HPF1 initiates serine ADP-ribosylation but restricts the polymerase activity of PARP1 in order to limit the length of poly-ADP-ribose chains. In addition to base excision repair (BER) pathway, also involved in double-strand breaks (DSBs) repair: together with TIMELESS, accumulates at DNA damage sites and promotes homologous recombination repair by mediating poly-ADP-ribosylation. Mediates the poly-ADP-ribosylation of a number of proteins, including itself, APLF, CHFR and NFAT5. In addition to proteins, also able to ADP-ribosylate DNA: catalyzes ADP-ribosylation of DNA strand break termini containing terminal phosphates and a 2'-OH group in single- and double-stranded DNA, respectively. Required for PARP9 and DTX3L recruitment to DNA damage sites. PARP1-dependent PARP9-DTX3L-mediated ubiquitination promotes the rapid and specific recruitment of 53BP1/TP53BP1, UIMC1/RAP80, and BRCA1 to DNA damage sites. PARP1-mediated DNA repair in neurons plays a role in sleep: senses DNA damage in neurons and promotes sleep, facilitating efficient DNA repair. In addition to DNA repair, also involved in other processes, such as transcription regulation, programmed cell death, membrane repair, adipogenesis and innate immunity. Acts as a repressor of transcription: binds to nucleosomes and modulates chromatin structure in a manner similar to histone H1, thereby altering RNA polymerase II. Acts both as a positive and negative regulator of transcription elongation, depending on the context. Acts as a positive regulator of transcription elongation by mediating poly-ADP-ribosylation of NELFE, preventing RNA-binding activity of NELFE and relieving transcription pausing. Acts as a negative regulator of transcription elongation in response to DNA damage by catalyzing poly-ADP-ribosylation of CCNT1, disrupting the phase separation activity of CCNT1 and subsequent activation of CDK9. Involved in replication fork progression following interaction with CARM1: mediates poly-ADP-ribosylation at replication forks, slowing fork progression. Poly-ADP-ribose chains generated by PARP1 also play a role in poly-ADP-ribose-dependent cell death, a process named parthanatos. Also acts as a negative regulator of the cGAS-STING pathway. Acts by mediating poly-ADP-ribosylation of CGAS: PARP1 translocates into the cytosol following phosphorylation by PRKDC and catalyzes poly-ADP-ribosylation and inactivation of CGAS. Acts as a negative regulator of adipogenesis: catalyzes poly-ADP-ribosylation of histone H2B on 'Glu-35' (H2BE35ADPr) following interaction with NMNAT1, inhibiting phosphorylation of H2B at 'Ser-36' (H2BS36ph), thereby blocking expression of pro-adipogenetic genes. Involved in the synthesis of ATP in the nucleus, together with NMNAT1, PARG and NUDT5. Nuclear ATP generation is required for extensive chromatin remodeling events that are energy-consuming. Its function is as follows. Promotes AIFM1-mediated apoptosis. This form, which translocates into the cytoplasm following cleavage by caspase-3 (CASP3) and caspase-7 (CASP7) in response to apoptosis, is auto-poly-ADP-ribosylated and serves as a poly-ADP-ribose carrier to induce AIFM1-mediated apoptosis. In terms of biological role, this cleavage form irreversibly binds to DNA breaks and interferes with DNA repair, promoting DNA damage-induced apoptosis. This is Poly [ADP-ribose] polymerase 1 (PARP1) from Bos taurus (Bovine).